The following is a 383-amino-acid chain: GA-binding protein subunit beta-1 (383 aa).

Ser2 carries the N-acetylserine modification. ANK repeat units follow at residues 5–34 and 37–66; these read DLGK…PFTT and LGTS…SRDA. Lys69 carries the N6-acetyllysine modification. ANK repeat units follow at residues 70–99, 103–132, and 136–166; these read VDRT…DVNA, LKMT…DVHT, and FCKT…QINT. N6-acetyllysine is present on residues Lys340 and Lys369.

Heterotetramer of two alpha and two beta subunits. Interacts with HCFC1, causing repression of transcriptional activity. In terms of processing, acetylated by EP300/p300. Deacetylated by SIRT7, promoting heterotetramerization and activity.

The protein localises to the nucleus. In terms of biological role, transcription factor capable of interacting with purine rich repeats (GA repeats). Acts as a master regulator of nuclear-encoded mitochondrial genes. In Bos taurus (Bovine), this protein is GA-binding protein subunit beta-1 (GABPB1).